The primary structure comprises 166 residues: Peptide deformylase (166 aa).

Residues cysteine 88 and histidine 130 each contribute to the Fe cation site. Glutamate 131 is an active-site residue. Histidine 134 is a Fe cation binding site.

Belongs to the polypeptide deformylase family. The cofactor is Fe(2+).

The catalysed reaction is N-terminal N-formyl-L-methionyl-[peptide] + H2O = N-terminal L-methionyl-[peptide] + formate. Functionally, removes the formyl group from the N-terminal Met of newly synthesized proteins. Requires at least a dipeptide for an efficient rate of reaction. N-terminal L-methionine is a prerequisite for activity but the enzyme has broad specificity at other positions. This Thermoanaerobacter sp. (strain X514) protein is Peptide deformylase.